We begin with the raw amino-acid sequence, 311 residues long: Coproporphyrin III ferrochelatase 1 (311 aa).

Fe-coproporphyrin III-binding positions include tyrosine 12, arginine 29, 45–46 (RY), serine 53, and tyrosine 124. Positions 182 and 263 each coordinate Fe(2+).

It belongs to the ferrochelatase family.

The protein localises to the cytoplasm. It carries out the reaction Fe-coproporphyrin III + 2 H(+) = coproporphyrin III + Fe(2+). Its pathway is porphyrin-containing compound metabolism; protoheme biosynthesis. In terms of biological role, involved in coproporphyrin-dependent heme b biosynthesis. Catalyzes the insertion of ferrous iron into coproporphyrin III to form Fe-coproporphyrin III. The polypeptide is Coproporphyrin III ferrochelatase 1 (Bacillus cereus (strain ZK / E33L)).